The following is a 384-amino-acid chain: 8-amino-7-oxononanoate synthase (384 aa).

Residue Arg-21 coordinates substrate. Residue 108–109 (GF) coordinates pyridoxal 5'-phosphate. His-133 contributes to the substrate binding site. Residues Ser-179, His-207, and Thr-233 each contribute to the pyridoxal 5'-phosphate site. Lys-236 is subject to N6-(pyridoxal phosphate)lysine. Thr-352 contributes to the substrate binding site.

It belongs to the class-II pyridoxal-phosphate-dependent aminotransferase family. BioF subfamily. As to quaternary structure, homodimer. The cofactor is pyridoxal 5'-phosphate.

It catalyses the reaction 6-carboxyhexanoyl-[ACP] + L-alanine + H(+) = (8S)-8-amino-7-oxononanoate + holo-[ACP] + CO2. It functions in the pathway cofactor biosynthesis; biotin biosynthesis. In terms of biological role, catalyzes the decarboxylative condensation of pimeloyl-[acyl-carrier protein] and L-alanine to produce 8-amino-7-oxononanoate (AON), [acyl-carrier protein], and carbon dioxide. In Escherichia coli (strain K12 / DH10B), this protein is 8-amino-7-oxononanoate synthase.